Here is a 914-residue protein sequence, read N- to C-terminus: Neuropilin-1 (914 aa).

The N-terminal stretch at 1-18 is a signal peptide; that stretch reads MDWGLFLHCAALTFTLSR. Over 20–847 the chain is Extracellular; sequence LRSDKCGDTI…PGNVLKTLDP (828 aa). 3 cysteine pairs are disulfide-bonded: cysteine 25/cysteine 52, cysteine 80/cysteine 102, and cysteine 145/cysteine 171. CUB domains lie at 25-139 and 145-263; these read CGDT…YEVF and CSRN…YSVS. Asparagine 148 carries N-linked (GlcNAc...) asparagine glycosylation. The Ca(2+) site is built by glutamate 193, aspartate 207, and aspartate 248. Cysteine 204 and cysteine 226 are oxidised to a cystine. Asparagine 259 carries an N-linked (GlcNAc...) asparagine glycan. 2 disulfide bridges follow: cysteine 273–cysteine 422 and cysteine 429–cysteine 581. 2 F5/8 type C domains span residues 273–422 and 429–581; these read CMEP…VYGC and CSGM…LLGC. The N-linked (GlcNAc...) asparagine glycan is linked to asparagine 520. O-linked (Xyl...) (chondroitin sulfate) serine; alternate glycosylation is present at serine 610. Serine 610 carries O-linked (Xyl...) (heparan sulfate) serine; alternate glycosylation. The MAM domain occupies 636 to 801; sequence PYNLNCGFGW…NHISQEDCQK (166 aa). The tract at residues 809 to 829 is disordered; sequence IVEEDPESNQTGFTPSYRTDE. Over residues 816-825 the composition is skewed to polar residues; sequence SNQTGFTPSY. N-linked (GlcNAc...) asparagine glycosylation occurs at asparagine 817. Residues 848–870 traverse the membrane as a helical segment; that stretch reads ILITIIAMSALGVLLGAICGVVL. At 871–914 the chain is on the cytoplasmic side; it reads YCACWHNGMSERNLSALENYNFELVDGVKLKKDKLNTQNSYSEA.

This sequence belongs to the neuropilin family. As to quaternary structure, homodimer, and heterodimer. In terms of tissue distribution, developing nervous system; optic tectum (layers D and E of SGFS), amacrine cells of retina, neurites of dorsal root ganglia. Also expressed in non-neuronal cells, e.g. blood vessels in the entire embryo.

The protein resides in the mitochondrion membrane. It is found in the cell membrane. In terms of biological role, receptor involved in the development of the cardiovascular system, in angiogenesis, in the formation of certain neuronal circuits and in organogenesis outside the nervous system. Mediates the chemorepulsant activity of semaphorins. Binding to VEGFA initiates a signaling pathway needed for motor neuron axon guidance and cell body migration, including for the caudal migration of facial motor neurons from rhombomere 4 to rhombomere 6 during embryonic development. Regulates mitochondrial iron transport via interaction. In Gallus gallus (Chicken), this protein is Neuropilin-1 (NRP1).